Consider the following 328-residue polypeptide: Putative thiosulfate sulfurtransferase mpst-1 (328 aa).

2 Rhodanese domains span residues 22-162 (NKEG…EVST) and 202-320 (KTSE…KKIS). Cysteine 278 (cysteine persulfide intermediate) is an active-site residue.

It carries out the reaction thiosulfate + hydrogen cyanide = thiocyanate + sulfite + 2 H(+). In Caenorhabditis elegans, this protein is Putative thiosulfate sulfurtransferase mpst-1 (mpst-1).